Here is a 635-residue protein sequence, read N- to C-terminus: Threonine--tRNA ligase (635 aa).

Residues 1 to 58 (MIHVTCNQEAFELPEGASAMDLANKMKQSHCFAGALINDQEKDLSTTLQDGDTVLFLT) form the TGS domain. A catalytic region spans residues 237-528 (DHRVLGTKLD…LIEHFKGRFP (292 aa)). 3 residues coordinate Zn(2+): cysteine 328, histidine 379, and histidine 505.

Belongs to the class-II aminoacyl-tRNA synthetase family. In terms of assembly, homodimer. Requires Zn(2+) as cofactor.

Its subcellular location is the cytoplasm. It catalyses the reaction tRNA(Thr) + L-threonine + ATP = L-threonyl-tRNA(Thr) + AMP + diphosphate + H(+). In terms of biological role, catalyzes the attachment of threonine to tRNA(Thr) in a two-step reaction: L-threonine is first activated by ATP to form Thr-AMP and then transferred to the acceptor end of tRNA(Thr). Also edits incorrectly charged L-seryl-tRNA(Thr). The sequence is that of Threonine--tRNA ligase from Chlamydia trachomatis serovar A (strain ATCC VR-571B / DSM 19440 / HAR-13).